The chain runs to 279 residues: Alcohol dehydrogenase-related 31 kDa protein (279 aa).

11-34 (YVADCGGIALETSKVLMTKNIAKL) contributes to the NAD(+) binding site. Serine 139 is a binding site for substrate. Residue tyrosine 152 is the Proton acceptor of the active site.

Belongs to the short-chain dehydrogenases/reductases (SDR) family.

This Drosophila guanche (Fruit fly) protein is Alcohol dehydrogenase-related 31 kDa protein (Adhr).